The primary structure comprises 153 residues: uncharacterized protein (153 aa).

The tract at residues 72 to 98 (LPISKTNDAERSQQTTKAPVMERTESS) is disordered.

It is found in the cytoplasm. The protein resides in the nucleus. This is an uncharacterized protein from Schizosaccharomyces pombe (strain 972 / ATCC 24843) (Fission yeast).